The chain runs to 312 residues: Homoserine O-acetyltransferase (312 aa).

Cysteine 142 acts as the Acyl-thioester intermediate in catalysis. 2 residues coordinate substrate: lysine 163 and serine 192. The active-site Proton acceptor is the histidine 235. Residue glutamate 237 is part of the active site. Position 249 (arginine 249) interacts with substrate.

This sequence belongs to the MetA family.

Its subcellular location is the cytoplasm. The enzyme catalyses L-homoserine + acetyl-CoA = O-acetyl-L-homoserine + CoA. It functions in the pathway amino-acid biosynthesis; L-methionine biosynthesis via de novo pathway; O-acetyl-L-homoserine from L-homoserine: step 1/1. Its function is as follows. Transfers an acetyl group from acetyl-CoA to L-homoserine, forming acetyl-L-homoserine. The protein is Homoserine O-acetyltransferase of Ruegeria pomeroyi (strain ATCC 700808 / DSM 15171 / DSS-3) (Silicibacter pomeroyi).